The primary structure comprises 124 residues: Mitochondrial import inner membrane translocase subunit TIM16 (124 aa).

Residues 58–109 (EAQQILNISKLSPEEVQNYEHLFKVNDKSVGDSFYLQSKVVRAKERLDEELQ) form a J-like region. The residue at position 69 (S69) is a Phosphoserine.

Belongs to the TIM16/PAM16 family. In terms of assembly, probable component of the PAM complex at least composed of a mitochondrial HSP70 protein, GRPEL1 or GRPEL2, TIMM44, TIMM16/PAM16 and TIMM14/DNAJC19. Interacts with DNAJC19. Directly interacts with DNAJC15; this interaction counteracts DNAJC15-dependent stimulation of HSPA9 ATPase activity. Associates with the TIM23 complex.

The protein localises to the mitochondrion inner membrane. In terms of biological role, regulates ATP-dependent protein translocation into the mitochondrial matrix. Inhibits DNAJC19 stimulation of HSPA9/Mortalin ATPase activity. This chain is Mitochondrial import inner membrane translocase subunit TIM16 (Magmas-ps1), found in Rattus norvegicus (Rat).